The sequence spans 609 residues: Probable translation initiation factor IF-2 (609 aa).

In terms of domain architecture, tr-type G spans L12–M230. Positions G21–T28 are G1. A GTP-binding site is contributed by G21 to T28. The interval Q46–H50 is G2. A G3 region spans residues D86 to G89. Residues D86 to H90 and N140 to D143 contribute to the GTP site. The interval N140 to D143 is G4. Residues S208–K210 are G5.

Belongs to the TRAFAC class translation factor GTPase superfamily. Classic translation factor GTPase family. IF-2 subfamily.

In terms of biological role, function in general translation initiation by promoting the binding of the formylmethionine-tRNA to ribosomes. Seems to function along with eIF-2. The sequence is that of Probable translation initiation factor IF-2 from Ignicoccus hospitalis (strain KIN4/I / DSM 18386 / JCM 14125).